A 442-amino-acid chain; its full sequence is 3-phosphoshikimate 1-carboxyvinyltransferase (442 aa).

3-phosphoshikimate is bound by residues lysine 27, serine 28, and arginine 32. Lysine 27 contributes to the phosphoenolpyruvate binding site. 2 residues coordinate phosphoenolpyruvate: glycine 100 and arginine 128. 6 residues coordinate 3-phosphoshikimate: serine 174, serine 175, glutamine 176, serine 204, aspartate 321, and lysine 348. Phosphoenolpyruvate is bound at residue glutamine 176. Aspartate 321 (proton acceptor) is an active-site residue. Arginine 352, arginine 394, and lysine 424 together coordinate phosphoenolpyruvate.

This sequence belongs to the EPSP synthase family. In terms of assembly, monomer.

It localises to the cytoplasm. It carries out the reaction 3-phosphoshikimate + phosphoenolpyruvate = 5-O-(1-carboxyvinyl)-3-phosphoshikimate + phosphate. It participates in metabolic intermediate biosynthesis; chorismate biosynthesis; chorismate from D-erythrose 4-phosphate and phosphoenolpyruvate: step 6/7. Its function is as follows. Catalyzes the transfer of the enolpyruvyl moiety of phosphoenolpyruvate (PEP) to the 5-hydroxyl of shikimate-3-phosphate (S3P) to produce enolpyruvyl shikimate-3-phosphate and inorganic phosphate. This chain is 3-phosphoshikimate 1-carboxyvinyltransferase, found in Herminiimonas arsenicoxydans.